Here is a 399-residue protein sequence, read N- to C-terminus: Nicotinate phosphoribosyltransferase (399 aa).

His217 carries the post-translational modification Phosphohistidine; by autocatalysis.

The protein belongs to the NAPRTase family. In terms of processing, transiently phosphorylated on a His residue during the reaction cycle. Phosphorylation strongly increases the affinity for substrates and increases the rate of nicotinate D-ribonucleotide production. Dephosphorylation regenerates the low-affinity form of the enzyme, leading to product release.

It carries out the reaction nicotinate + 5-phospho-alpha-D-ribose 1-diphosphate + ATP + H2O = nicotinate beta-D-ribonucleotide + ADP + phosphate + diphosphate. The protein operates within cofactor biosynthesis; NAD(+) biosynthesis; nicotinate D-ribonucleotide from nicotinate: step 1/1. Catalyzes the synthesis of beta-nicotinate D-ribonucleotide from nicotinate and 5-phospho-D-ribose 1-phosphate at the expense of ATP. The sequence is that of Nicotinate phosphoribosyltransferase from Burkholderia ambifaria (strain MC40-6).